The primary structure comprises 810 residues: Hemoglobin-haptoglobin utilization protein B (810 aa).

Positions 1-22 (MPIPFKPVLAAAAIAQAFPAFA) are cleaved as a signal peptide. Residues 34 to 166 (NEITVTGTHK…LGGAVNYQTK (133 aa)) form the TBDR plug domain. A TBDR beta-barrel domain is found at 175–810 (DKPYHLGIKG…SYNFTIEAKF (636 aa)). A TonB C-terminal box motif is present at residues 793 to 810 (QRFTSPGRSYNFTIEAKF).

It belongs to the TonB-dependent receptor family.

The protein localises to the cell outer membrane. Functionally, acts as a receptor for hemoglobin or the hemoglobin/haptoglobin complex and is required for heme uptake. This Neisseria meningitidis serogroup A / serotype 4A (strain DSM 15465 / Z2491) protein is Hemoglobin-haptoglobin utilization protein B (hpuB).